The chain runs to 119 residues: Ribonuclease P protein component (119 aa).

The disordered stretch occupies residues 1-20 (MLPAQHRMTRSTEFGATVSK).

The protein belongs to the RnpA family. Consists of a catalytic RNA component (M1 or rnpB) and a protein subunit.

The catalysed reaction is Endonucleolytic cleavage of RNA, removing 5'-extranucleotides from tRNA precursor.. Functionally, RNaseP catalyzes the removal of the 5'-leader sequence from pre-tRNA to produce the mature 5'-terminus. It can also cleave other RNA substrates such as 4.5S RNA. The protein component plays an auxiliary but essential role in vivo by binding to the 5'-leader sequence and broadening the substrate specificity of the ribozyme. This chain is Ribonuclease P protein component, found in Mycolicibacterium vanbaalenii (strain DSM 7251 / JCM 13017 / BCRC 16820 / KCTC 9966 / NRRL B-24157 / PYR-1) (Mycobacterium vanbaalenii).